Reading from the N-terminus, the 379-residue chain is MKYSTIFSAAAAVFAGSAAAVGVSGSAEGFAEGVTGGGDATPVYPDTIDELVSYLGDDEARVIVLTKTFDFTDSEGTTTGTGCAPWGTASACQVAIDQDDWCENYEPDAPSVSVEYYNAGVLGITVTSNKSLIGEGSSGAIKGKGLRIVSGAENIIIQNIAVTDINPKYVWGGDAITLDDCDLVWIDHVTTARIGRQHYVLGTSADNRVSLTNNYIDGVSDYSATCDGYHYWGIYLDGDADLVTMKGNYIYHTSGRSPKVQDNTLLHCVNNYFYDISGHAFEIGEGGYVLAEGNVFQNVDTVLETYEGAAFTVPSTTAGEVCSTYLGRDCVINGFGCSGTFSEDSTSFLSDFEGKNIASASAYTSVASRVVANAGQGNL.

The first 20 residues, 1–20 (MKYSTIFSAAAAVFAGSAAA), serve as a signal peptide directing secretion. 2 disulfides stabilise this stretch: Cys-83/Cys-102 and Cys-92/Cys-226. The O-linked (Man) threonine glycan is linked to Thr-88. Asn-129 is a glycosylation site (N-linked (GlcNAc...) asparagine). Residue Arg-256 is part of the active site. A disulfide bridge connects residues Cys-322 and Cys-330. O-linked (Man) serine; in strain 4M-147 glycosylation occurs at Ser-368.

It belongs to the polysaccharide lyase 1 family. In terms of processing, N-glycosylated at Asn-129 and O-glycosylated at Thr-88 when expressed in Aspergillus nidulans. The protein from strain 4M-147 is O-glycosylated at Thr-88 and Ser-368. PubMed:9195887 modeled GalNAc at the O-glycosylation site, a glycosylation not observed in fungi. The O-linked saccharide is probably mannose.

The protein resides in the secreted. The catalysed reaction is Eliminative cleavage of (1-&gt;4)-alpha-D-galacturonan methyl ester to give oligosaccharides with 4-deoxy-6-O-methyl-alpha-D-galact-4-enuronosyl groups at their non-reducing ends.. Its function is as follows. Pectinolytic enzymes consist of four classes of enzymes: pectin lyase, polygalacturonase, pectin methylesterase and rhamnogalacturonase. Among pectinolytic enzymes, pectin lyase is the most important in depolymerization of pectin, since it cleaves internal glycosidic bonds of highly methylated pectins. This chain is Pectin lyase A (pelA), found in Aspergillus niger.